Consider the following 420-residue polypeptide: Phosphoribosylamine--glycine ligase (420 aa).

The region spanning 108–314 (KQFMEKYAIP…FAALIAALLN (207 aa)) is the ATP-grasp domain. 134–195 (LDERGVPIVI…EDFLAGEEFS (62 aa)) is an ATP binding site. The Mg(2+) site is built by E284 and N286.

It belongs to the GARS family. It depends on Mg(2+) as a cofactor. Requires Mn(2+) as cofactor.

The enzyme catalyses 5-phospho-beta-D-ribosylamine + glycine + ATP = N(1)-(5-phospho-beta-D-ribosyl)glycinamide + ADP + phosphate + H(+). It participates in purine metabolism; IMP biosynthesis via de novo pathway; N(1)-(5-phospho-D-ribosyl)glycinamide from 5-phospho-alpha-D-ribose 1-diphosphate: step 2/2. In Listeria innocua serovar 6a (strain ATCC BAA-680 / CLIP 11262), this protein is Phosphoribosylamine--glycine ligase.